The sequence spans 163 residues: EF-hand calcium-binding domain-containing protein 11 (163 aa).

EF-hand domains lie at Ser-18 to Tyr-53, Arg-91 to Lys-126, and Leu-127 to Glu-162. 5 residues coordinate Ca(2+): Asp-140, Asp-142, Asp-144, His-146, and Asp-151.

This is EF-hand calcium-binding domain-containing protein 11 (EFCAB11) from Homo sapiens (Human).